A 116-amino-acid chain; its full sequence is UPF0654 protein C869.09 (116 aa).

Positions 32–116 (LKEHGSESHY…LLEEVDDESK (85 aa)) are disordered. The segment covering 39-48 (SHYTTGTTRG) has biased composition (polar residues). Over residues 49 to 64 (QKADADDAGELREEGF) the composition is skewed to basic and acidic residues.

The protein belongs to the UPF0654 (con-6) family.

The protein resides in the cytoplasm. It localises to the nucleus. This is UPF0654 protein C869.09 from Schizosaccharomyces pombe (strain 972 / ATCC 24843) (Fission yeast).